An 863-amino-acid polypeptide reads, in one-letter code: DNA ligase (863 aa).

NAD(+) is bound by residues 76–80, 125–126, and Glu-159; these read DAAYD and SL. Lys-161 acts as the N6-AMP-lysine intermediate in catalysis. 2 residues coordinate NAD(+): Arg-182 and Glu-221. The interval 237–256 is disordered; that stretch reads EDAGRPPFANPRNAAAGSLR. The segment covering 241 to 253 has biased composition (low complexity); that stretch reads RPPFANPRNAAAG. Residues Lys-346 and Lys-370 each contribute to the NAD(+) site. Zn(2+)-binding residues include Cys-467, Cys-470, Cys-486, and Cys-492. Residues 781 to 863 form the BRCT domain; that stretch reads GLPQTLEGKS…DTLLATGDVQ (83 aa).

The protein belongs to the NAD-dependent DNA ligase family. LigA subfamily. The cofactor is Mg(2+). Mn(2+) is required as a cofactor.

It catalyses the reaction NAD(+) + (deoxyribonucleotide)n-3'-hydroxyl + 5'-phospho-(deoxyribonucleotide)m = (deoxyribonucleotide)n+m + AMP + beta-nicotinamide D-nucleotide.. DNA ligase that catalyzes the formation of phosphodiester linkages between 5'-phosphoryl and 3'-hydroxyl groups in double-stranded DNA using NAD as a coenzyme and as the energy source for the reaction. It is essential for DNA replication and repair of damaged DNA. The sequence is that of DNA ligase from Bifidobacterium animalis subsp. lactis (strain AD011).